A 439-amino-acid polypeptide reads, in one-letter code: Forkhead box protein J1-B (439 aa).

Positions 124 to 218 (KPPYSYATLI…MNGAMKKRRL (95 aa)) form a DNA-binding region, fork-head.

The protein belongs to the FOXJ1 family.

It is found in the nucleus. Functionally, key transcription factor required for motile ciliogenesis. Activates genes essential for motile cilia formation and function. In Xenopus laevis (African clawed frog), this protein is Forkhead box protein J1-B (foxj1-b).